The following is a 792-amino-acid chain: Zinc finger CCCH domain-containing protein 11A (792 aa).

3 C3H1-type zinc fingers span residues 2–29 (PNQGEDCYFYFYSTCAKGDSCPFRHCEA), 31–57 (LGNETVCTLWQEGRCFRQVCRFRHMEI), and 60–87 (KRSEIPCYWENQPVGCQKLNCAFHHTRS). 3 disordered regions span residues 103–191 (PTVP…VHNG), 223–331 (KKMK…KAGE), and 345–443 (ASQK…RSMQ). At serine 108 the chain carries Phosphoserine. Glycyl lysine isopeptide (Lys-Gly) (interchain with G-Cter in SUMO2) cross-links involve residues lysine 114 and lysine 124. Residues 115 to 135 (TSQLTVQQSKLSVQSNPSPQL) show a composition bias toward polar residues. Serine 132 carries the phosphoserine modification. Residue lysine 140 forms a Glycyl lysine isopeptide (Lys-Gly) (interchain with G-Cter in SUMO2) linkage. Phosphoserine is present on residues serine 149, serine 171, and serine 289. Residues 160–175 (ADDDEDDDDQFSEEGD) show a composition bias toward acidic residues. Composition is skewed to basic and acidic residues over residues 308-331 (KKVESPETNIDKAPKKERGHKAGE) and 345-360 (ASQKRGELQTKLKAEE). Residues 338-360 (EEILLERASQKRGELQTKLKAEE) adopt a coiled-coil conformation. The residue at position 346 (serine 346) is a Phosphoserine. Low complexity predominate over residues 367–376 (SPSGTKSSSS). Basic and acidic residues-rich tracts occupy residues 393-405 (QQEMERQKSKKDT) and 431-443 (QPEEPAGRARSMQ). Residue lysine 454 forms a Glycyl lysine isopeptide (Lys-Gly) (interchain with G-Cter in SUMO2) linkage. Disordered regions lie at residues 458-531 (ALRV…PTKL) and 545-571 (QRLQERGASQKEKAALSSVRGDEASSY). The segment covering 461 to 473 (VQQSSESSGNSRP) has biased composition (polar residues). Basic and acidic residues-rich tracts occupy residues 492–501 (GVKEEKKCGL) and 545–558 (QRLQERGASQKEKA). Lysine 601 participates in a covalent cross-link: Glycyl lysine isopeptide (Lys-Gly) (interchain with G-Cter in SUMO2). Residues 690–750 (LSEDKPVTMS…SASTGKPPLS (61 aa)) form a disordered region. Over residues 698-715 (MSETENPKDSSVLSSAQA) the composition is skewed to polar residues. Positions 717–730 (SEPLLPEGSGPSSS) are enriched in low complexity.

In terms of assembly, interacts with TREX complex components THOC2, DDX39 and POLDIP3; the interactions are ATP-dependent. Interacts with PABPN1; this interaction retains ZC3H11A in nuclear speckles. Interacts with KPNA3.

It is found in the nucleus speckle. Its function is as follows. Through its association with TREX complex components, may participate in the export and post-transcriptional coordination of selected mRNA transcripts, including those required to maintain the metabolic processes in embryonic cells. Binds RNA. The sequence is that of Zinc finger CCCH domain-containing protein 11A (Zc3h11a) from Mus musculus (Mouse).